Consider the following 94-residue polypeptide: MTLNNLQLFAHKKGGGSTSNGRDSQAKRLGAKAADGQTVTGGSILYRQRGTHIYPGVNVGRGGDDTLFAKVEGVVRFERKGRDKKQVSVYPIAK.

Positions 1 to 9 (MTLNNLQLF) are excised as a propeptide. A disordered region spans residues 9 to 33 (FAHKKGGGSTSNGRDSQAKRLGAKA).

Belongs to the bacterial ribosomal protein bL27 family. The N-terminus is cleaved by ribosomal processing cysteine protease Prp.

The sequence is that of Large ribosomal subunit protein bL27 from Streptococcus pneumoniae serotype 4 (strain ATCC BAA-334 / TIGR4).